Reading from the N-terminus, the 253-residue chain is Porin thermoregulatory protein EnvY (253 aa).

One can recognise an HTH araC/xylS-type domain in the interval 149 to 246; sequence DSVCRIIQSD…GLTPLNYLAK (98 aa). 2 consecutive DNA-binding regions (H-T-H motif) follow at residues 166-187 and 213-236; these read RIVA…KNEN and ITQV…KAFY.

Influences the temperature-dependent expression of several E.coli envelope proteins, most notably the porins OmpF and OmpC and the lambda receptor, LamB. The protein is Porin thermoregulatory protein EnvY (envY) of Escherichia coli (strain K12).